We begin with the raw amino-acid sequence, 298 residues long: Ribosomal RNA small subunit methyltransferase H (298 aa).

S-adenosyl-L-methionine contacts are provided by residues 38–40, D57, F84, D100, and Q107; that span reads GGH.

It belongs to the methyltransferase superfamily. RsmH family.

It is found in the cytoplasm. It carries out the reaction cytidine(1402) in 16S rRNA + S-adenosyl-L-methionine = N(4)-methylcytidine(1402) in 16S rRNA + S-adenosyl-L-homocysteine + H(+). Its function is as follows. Specifically methylates the N4 position of cytidine in position 1402 (C1402) of 16S rRNA. The sequence is that of Ribosomal RNA small subunit methyltransferase H from Acaryochloris marina (strain MBIC 11017).